Consider the following 94-residue polypeptide: Large ribosomal subunit protein bL27 (94 aa).

A propeptide spanning residues 1–9 (MNLANLQLF) is cleaved from the precursor. The disordered stretch occupies residues 11-33 (HKKGGGSTSNGRDSQAKRLGAKA).

Belongs to the bacterial ribosomal protein bL27 family. The N-terminus is cleaved by ribosomal processing cysteine protease Prp.

The sequence is that of Large ribosomal subunit protein bL27 from Streptococcus agalactiae serotype V (strain ATCC BAA-611 / 2603 V/R).